A 247-amino-acid polypeptide reads, in one-letter code: 2,5-diamino-6-ribosylamino-4(3H)-pyrimidinone 5'-phosphate reductase (247 aa).

NADP(+)-binding positions include threonine 75, aspartate 79, glycine 165, and 187-191 (GASII).

Belongs to the HTP reductase family. Homodimer.

It carries out the reaction 2,5-diamino-6-(1-D-ribitylamino)pyrimidin-4(3H)-one 5'-phosphate + NADP(+) = 2,5-diamino-6-(1-D-ribosylamino)pyrimidin-4(3H)-one 5'-phosphate + NADPH + H(+). It catalyses the reaction 2,5-diamino-6-(1-D-ribitylamino)pyrimidin-4(3H)-one 5'-phosphate + NAD(+) = 2,5-diamino-6-(1-D-ribosylamino)pyrimidin-4(3H)-one 5'-phosphate + NADH + H(+). The protein operates within cofactor biosynthesis; riboflavin biosynthesis. Its function is as follows. Catalyzes an early step in riboflavin biosynthesis, the NADPH-dependent reduction of the ribose side chain of 2,5-diamino-6-ribosylamino-4(3H)-pyrimidinone 5'-phosphate, yielding 2,5-diamino-6-ribitylamino-4(3H)-pyrimidinone 5'-phosphate. The sequence is that of 2,5-diamino-6-ribosylamino-4(3H)-pyrimidinone 5'-phosphate reductase (RIB7) from Debaryomyces hansenii (strain ATCC 36239 / CBS 767 / BCRC 21394 / JCM 1990 / NBRC 0083 / IGC 2968) (Yeast).